We begin with the raw amino-acid sequence, 206 residues long: LexA repressor (206 aa).

A DNA-binding region (H-T-H motif) is located at residues 28 to 48 (RAEIATRLGFKSANAAEEHLK). Active-site for autocatalytic cleavage activity residues include serine 123 and lysine 160.

Belongs to the peptidase S24 family. As to quaternary structure, homodimer.

The enzyme catalyses Hydrolysis of Ala-|-Gly bond in repressor LexA.. Functionally, represses a number of genes involved in the response to DNA damage (SOS response), including recA and lexA. In the presence of single-stranded DNA, RecA interacts with LexA causing an autocatalytic cleavage which disrupts the DNA-binding part of LexA, leading to derepression of the SOS regulon and eventually DNA repair. The sequence is that of LexA repressor from Shewanella putrefaciens (strain CN-32 / ATCC BAA-453).